A 551-amino-acid polypeptide reads, in one-letter code: Crossover junction endonuclease EME1B (551 aa).

Disordered stretches follow at residues 1–55 (MNDH…PIFV) and 187–239 (TTLP…RLEK). Residues 37-51 (SDPTPQKQPPESSFT) show a composition bias toward polar residues. Positions 202-239 (SKEDKTSAMEEKKLRKEQERLEKAASKAEEAERKRLEK) are enriched in basic and acidic residues. Residues 203-253 (KEDKTSAMEEKKLRKEQERLEKAASKAEEAERKRLEKEKKKWEKGKLALKS) are a coiled coil. One can recognise an ERCC4 domain in the interval 287 to 484 (NPIERSIVWT…PSMKSLLKVY (198 aa)).

The protein belongs to the EME1/MMS4 family. Forms a heterodimer with MUS81. It depends on Mg(2+) as a cofactor. The cofactor is Ca(2+).

Its subcellular location is the nucleus. Its function is as follows. Interacts with MUS81 to form a DNA structure-specific endonuclease with substrate preference for branched DNA structures with a 5'-end at the branch nick. Typical substrates include 3'-flap structures, D-loops, replication forks, nicked Holliday junctions and also intact Holliday junctions with a reduced efficiency. May be required in mitosis for the processing of stalled or collapsed replication fork intermediates. Plays a role in DNA repair and in genotoxic stress-induced homologous recombination (HR) in somatic cells. Mediates a subset of meiotic recombination events that are insensitive to crossover interference. The chain is Crossover junction endonuclease EME1B (EME1B) from Arabidopsis thaliana (Mouse-ear cress).